Reading from the N-terminus, the 1396-residue chain is DNA ligase 6 (1396 aa).

2 disordered regions span residues 441 to 464 (KNAC…DTTP) and 562 to 599 (MNLT…GPGQ). 2 short sequence motifs (nuclear localization signal) span residues 572–579 (GKRGKSSG) and 886–893 (LRKISVQT). Glu-1037 is a binding site for ATP. The active-site N6-AMP-lysine intermediate is the Lys-1039. ATP-binding residues include Arg-1044, Arg-1060, Glu-1092, and Phe-1136. Glu-1092 is a Mg(2+) binding site. Mg(2+) is bound at residue Glu-1207. ATP contacts are provided by Lys-1212, Arg-1225, and Lys-1231.

It belongs to the ATP-dependent DNA ligase family. Requires Mg(2+) as cofactor. In terms of tissue distribution, mostly expressed in buds and flowers, and, to a lower extent, in stems, leaves, siliques and seeds.

It localises to the nucleus. It carries out the reaction ATP + (deoxyribonucleotide)n-3'-hydroxyl + 5'-phospho-(deoxyribonucleotide)m = (deoxyribonucleotide)n+m + AMP + diphosphate.. Its function is as follows. DNA ligase that seals nicks in double-stranded DNA during DNA replication, DNA recombination and DNA repair. Required to maintain seed viability (e.g. longevity and storability) and during seed germination, probably by repairing DNA damage accumulated during seed development, storage and/or imbibition. Facilitates seed germination in cold conditions (2 degrees Celsius) and under oxidative stress (e.g. menadione, a genotoxic agent). Involved in repair of X-ray-induced damage. Functionally, limits stable root transformation by A.tumefaciens T-DNA. This chain is DNA ligase 6, found in Arabidopsis thaliana (Mouse-ear cress).